Here is a 116-residue protein sequence, read N- to C-terminus: NADH-ubiquinone oxidoreductase chain 3 (116 aa).

The next 3 helical transmembrane spans lie at 3 to 23 (LVTT…TISF), 56 to 76 (FFLI…LLPL), and 84 to 104 (APTL…LGLI).

The protein belongs to the complex I subunit 3 family.

Its subcellular location is the mitochondrion membrane. It carries out the reaction a ubiquinone + NADH + 5 H(+)(in) = a ubiquinol + NAD(+) + 4 H(+)(out). Functionally, core subunit of the mitochondrial membrane respiratory chain NADH dehydrogenase (Complex I) that is believed to belong to the minimal assembly required for catalysis. Complex I functions in the transfer of electrons from NADH to the respiratory chain. The immediate electron acceptor for the enzyme is believed to be ubiquinone. This is NADH-ubiquinone oxidoreductase chain 3 (MT-ND3) from Oncorhynchus nerka (Sockeye salmon).